We begin with the raw amino-acid sequence, 519 residues long: ATP synthase subunit beta, mitochondrial (519 aa).

The N-terminal 21 residues, 1–21, are a transit peptide targeting the mitochondrion; sequence MLTRFRSAVLRGAVSITGARA. ATP contacts are provided by residues 184–191 and R216; that span reads GAGVGKTV.

It belongs to the ATPase alpha/beta chains family. In terms of assembly, F-type ATPases have 2 components, F(1) - the catalytic core - and F(o) - the membrane proton channel. F(1) has five subunits: alpha(3), beta(3), gamma(1), delta(1), epsilon(1), plus the additional subunit P18 (Tb427.05.1710) that is not present in F(1)F(o) ATP synthase from metazoa. Subunit P18 (Tb927.5.1710) interacts with the alpha subunit with a 1:1 stoichiometry; the interaction is direct. Subunit gamma is part of the central stalk. F(o) has three main subunits: a, b and c. The trypanosomal ATPase complex contains additional subunits that are not present in the F(1)F(o) ATP synthase from metazoa.

The protein localises to the mitochondrion. The protein resides in the mitochondrion inner membrane. It catalyses the reaction ATP + H2O + 4 H(+)(in) = ADP + phosphate + 5 H(+)(out). Mitochondrial membrane ATP synthase (F(1)F(o) ATP synthase) produces ATP from ADP in the presence of a proton gradient across the membrane which is generated by electron transport complexes of the respiratory chain. F-type ATPases consist of two structural domains, F(1) - containing the extramembraneous catalytic core, and F(o) - containing the membrane proton channel, linked together by a central stalk and a peripheral stalk. During catalysis, ATP synthesis in the catalytic domain of F(1) is coupled via a rotary mechanism of the central stalk subunits to proton translocation. Subunits alpha and beta form the catalytic core in F(1). Rotation of the central stalk against the surrounding alpha(3)beta(3) subunits leads to hydrolysis of ATP in three separate catalytic sites on the beta subunits. Contrary to the procyclic, insect form that requires F(1)F(o) ATP synthase for ATP synthesis, the bloodstream form relies on ATP hydrolysis by F(1)F(o) ATP synthase to maintain its mitochondrial membrane potential. This chain is ATP synthase subunit beta, mitochondrial, found in Trypanosoma brucei brucei.